A 157-amino-acid chain; its full sequence is Endoribonuclease YbeY (157 aa).

Zn(2+) is bound by residues histidine 112, histidine 116, and histidine 122.

The protein belongs to the endoribonuclease YbeY family. Requires Zn(2+) as cofactor.

Its subcellular location is the cytoplasm. Its function is as follows. Single strand-specific metallo-endoribonuclease involved in late-stage 70S ribosome quality control and in maturation of the 3' terminus of the 16S rRNA. In Marinobacter nauticus (strain ATCC 700491 / DSM 11845 / VT8) (Marinobacter aquaeolei), this protein is Endoribonuclease YbeY.